A 354-amino-acid chain; its full sequence is tRNA N6-adenosine threonylcarbamoyltransferase (354 aa).

Residues histidine 111 and histidine 115 each coordinate Fe cation. Residues 134 to 138 (LVSGG), aspartate 167, glycine 180, and asparagine 279 contribute to the substrate site. Aspartate 319 provides a ligand contact to Fe cation.

This sequence belongs to the KAE1 / TsaD family. The cofactor is Fe(2+).

The protein localises to the cytoplasm. It catalyses the reaction L-threonylcarbamoyladenylate + adenosine(37) in tRNA = N(6)-L-threonylcarbamoyladenosine(37) in tRNA + AMP + H(+). Required for the formation of a threonylcarbamoyl group on adenosine at position 37 (t(6)A37) in tRNAs that read codons beginning with adenine. Is involved in the transfer of the threonylcarbamoyl moiety of threonylcarbamoyl-AMP (TC-AMP) to the N6 group of A37, together with TsaE and TsaB. TsaD likely plays a direct catalytic role in this reaction. In Neisseria meningitidis serogroup A / serotype 4A (strain DSM 15465 / Z2491), this protein is tRNA N6-adenosine threonylcarbamoyltransferase.